The primary structure comprises 607 residues: Heterocyst differentiation ATP-binding protein HepA (607 aa).

Residues 32 to 330 (AILAVIFSFL…INGTVAFLST (299 aa)) enclose the ABC transmembrane type-1 domain. A run of 5 helical transmembrane segments spans residues 33–53 (ILAV…IGFL), 77–97 (ILAA…LILL), 163–182 (FSGL…YFVV), 186–208 (ISWQ…LSTL), and 290–310 (IVIS…FFFV). Residues 364–598 (IDLVSVDFGY…RGKLWKYHQM (235 aa)) enclose the ABC transporter domain. 397–404 (GASGAGKT) serves as a coordination point for ATP.

This sequence belongs to the ABC transporter superfamily.

Its subcellular location is the cell inner membrane. Acts early in the process of morphological differentiation of heterocysts. This chain is Heterocyst differentiation ATP-binding protein HepA (hepA), found in Nostoc sp. (strain PCC 7120 / SAG 25.82 / UTEX 2576).